The primary structure comprises 295 residues: Pyridoxal 5'-phosphate synthase subunit PdxS (295 aa).

Position 25 (aspartate 25) interacts with D-ribose 5-phosphate. Lysine 82 serves as the catalytic Schiff-base intermediate with D-ribose 5-phosphate. Glycine 154 is a D-ribose 5-phosphate binding site. Residue arginine 166 coordinates D-glyceraldehyde 3-phosphate. D-ribose 5-phosphate-binding positions include glycine 215 and 236–237 (GS).

Belongs to the PdxS/SNZ family. As to quaternary structure, in the presence of PdxT, forms a dodecamer of heterodimers.

The catalysed reaction is aldehydo-D-ribose 5-phosphate + D-glyceraldehyde 3-phosphate + L-glutamine = pyridoxal 5'-phosphate + L-glutamate + phosphate + 3 H2O + H(+). It participates in cofactor biosynthesis; pyridoxal 5'-phosphate biosynthesis. Catalyzes the formation of pyridoxal 5'-phosphate from ribose 5-phosphate (RBP), glyceraldehyde 3-phosphate (G3P) and ammonia. The ammonia is provided by the PdxT subunit. Can also use ribulose 5-phosphate and dihydroxyacetone phosphate as substrates, resulting from enzyme-catalyzed isomerization of RBP and G3P, respectively. This is Pyridoxal 5'-phosphate synthase subunit PdxS from Listeria welshimeri serovar 6b (strain ATCC 35897 / DSM 20650 / CCUG 15529 / CIP 8149 / NCTC 11857 / SLCC 5334 / V8).